The following is a 243-amino-acid chain: Terpene cyclase ptmB (243 aa).

A run of 3 helical transmembrane segments spans residues 19–39 (IANL…VGMI), 48–68 (YGMA…YSLI), and 78–98 (GVFI…IKFA). Asn111 carries an N-linked (GlcNAc...) asparagine glycan. The next 4 membrane-spanning stretches (helical) occupy residues 112–132 (LSLI…ALAA), 137–157 (SLAY…GGLC), 172–194 (LWLS…WMYW), and 205–225 (LVLW…ICYW).

It belongs to the paxB family.

It is found in the membrane. It participates in secondary metabolite biosynthesis. Functionally, terpene cyclase; part of the gene cluster that mediates the biosynthesis of the indole diterpenes penitrems. The geranylgeranyl diphosphate (GGPP) synthase ptmG catalyzes the first step in penitrem biosynthesis via conversion of farnesyl pyrophosphate and isopentyl pyrophosphate into geranylgeranyl pyrophosphate (GGPP). Condensation of indole-3-glycerol phosphate with GGPP by the prenyl transferase ptmC then forms 3-geranylgeranylindole (3-GGI). Epoxidation by the FAD-dependent monooxygenase ptmM leads to a epoxidized-GGI that is substrate of the terpene cyclase ptmB for cyclization to yield paspaline. Paspaline is subsequently converted to 13-desoxypaxilline by the cytochrome P450 monooxygenase ptmP, the latter being then converted to paxilline by the cytochrome P450 monooxygenase ptmQ. Paxilline is converted to beta-paxitriol via C-10 ketoreduction by the short-chain dehydrogenase ptmH which can be monoprenylated at the C-20 by the indole diterpene prenyltransferase ptmD. A two-step elimination (acetylation and elimination) process performed by the O-acetyltransferase ptmV and ptmI leads to the production of the prenylated form of penijanthine. The FAD-linked oxidoreductase ptmO then converts the prenylated form of penijanthine into PC-M5 which is in turn transformed into PC-M4 by the aromatic dimethylallyltransferase ptmE. Five sequential oxidative transformations performed by the cytochrome P450 monooxygenases ptmK, ptmU, ptmL, ptmN and ptmJ yield the various penitrem compounds. PtmK, ptmU and ptmM are involved in the formation of the key bicyclic ring of penitrem C via the formation of the intermediates secopenitrem D and penitrem D. PtmL catalyzes the epoxidation of penitrem D and C to yield penitrem B and F, respectively. PtmJ catalyzes the last benzylic hydroxylation to convert penitrem B to prenitrem E and penitrem F to penitrem A. This Penicillium ochrochloron protein is Terpene cyclase ptmB.